We begin with the raw amino-acid sequence, 325 residues long: Small ribosomal subunit protein RACK1 (325 aa).

7 WD repeats span residues 13 to 44 (AHTD…ILWH), 61 to 91 (GHSH…RLWD), 103 to 133 (GHTK…KLWN), 147 to 179 (AHSD…KVWN), 191 to 221 (GHSG…LLWD), 232 to 261 (DAGS…KIWD), and 291 to 321 (KKVI…RVWG).

The protein belongs to the WD repeat G protein beta family. Ribosomal protein RACK1 subfamily.

Functionally, plays a role in hormone-mediated cell division. The sequence is that of Small ribosomal subunit protein RACK1 (GB1) from Medicago sativa (Alfalfa).